A 364-amino-acid chain; its full sequence is tRNA(Met) cytidine acetate ligase (364 aa).

ATP-binding positions include I7–L20, G96, N152, and R175.

Belongs to the TmcAL family.

The protein resides in the cytoplasm. The enzyme catalyses cytidine(34) in elongator tRNA(Met) + acetate + ATP = N(4)-acetylcytidine(34) in elongator tRNA(Met) + AMP + diphosphate. Functionally, catalyzes the formation of N(4)-acetylcytidine (ac(4)C) at the wobble position of elongator tRNA(Met), using acetate and ATP as substrates. First activates an acetate ion to form acetyladenylate (Ac-AMP) and then transfers the acetyl group to tRNA to form ac(4)C34. This is tRNA(Met) cytidine acetate ligase from Streptococcus sanguinis (strain SK36).